Consider the following 220-residue polypeptide: Type II restriction enzyme NspV (220 aa).

It catalyses the reaction Endonucleolytic cleavage of DNA to give specific double-stranded fragments with terminal 5'-phosphates.. A P subtype restriction enzyme that recognizes the double-stranded sequence 5'-TTCGAA-3' and cleaves after T-2. This Nostoc sp. (strain ATCC 29411 / PCC 7524) protein is Type II restriction enzyme NspV.